A 163-amino-acid chain; its full sequence is CASP-like protein 1C3 (163 aa).

Residues 1–6 (MAKIKK) are Cytoplasmic-facing. A helical transmembrane segment spans residues 7–27 (IFTNFLRLLALAATVVAIVFM). The Extracellular segment spans residues 28 to 52 (VTSHDSAQVLNLTFTVKYSNTPVFK). Asn-38 is a glycosylation site (N-linked (GlcNAc...) asparagine). Residues 53-73 (YFVIAEAIAGGYIVISILLSF) form a helical membrane-spanning segment. Residues 74–79 (KSLFWR) lie on the Cytoplasmic side of the membrane. Residues 80 to 100 (LLVILDMVTAVLLTSSISAAL) form a helical membrane-spanning segment. Residues 101 to 128 (AIAQVGKKGNTHAGWLPVCEQVPDFCDQ) are Extracellular-facing. A helical transmembrane segment spans residues 129 to 149 (VTIALIAGFAAAIIYFVLLLC). The Cytoplasmic segment spans residues 150–163 (SLYVVLSPIFVVTP).

Belongs to the Casparian strip membrane proteins (CASP) family. Homodimer and heterodimers.

The protein localises to the cell membrane. This chain is CASP-like protein 1C3, found in Populus trichocarpa (Western balsam poplar).